Here is a 185-residue protein sequence, read N- to C-terminus: Large ribosomal subunit protein uL22 (185 aa).

Belongs to the universal ribosomal protein uL22 family.

In Debaryomyces hansenii (strain ATCC 36239 / CBS 767 / BCRC 21394 / JCM 1990 / NBRC 0083 / IGC 2968) (Yeast), this protein is Large ribosomal subunit protein uL22 (RPL17).